The chain runs to 551 residues: Probable inorganic carbon transporter subunit DabB2 (551 aa).

A run of 14 helical transmembrane segments spans residues 6–26 (SHTT…AAVI), 42–62 (VQWT…SFLF), 65–85 (QQNL…LALS), 86–106 (IQVN…LSVI), 132–152 (GFFL…AIIA), 187–207 (LLLA…FSQI), 217–237 (LSIA…LKSA), 252–272 (PTPV…IIVL), 284–304 (ALLL…LVML), 321–341 (LGFM…LHLV), 374–394 (VVAW…IAAA), 404–424 (MLPA…LKAL), 434–454 (VAAG…EVFI), and 469–489 (PLLD…VAWL).

This sequence belongs to the inorganic carbon transporter (TC 9.A.2) DabB family. Forms a complex with DabA2, possibly a heterodimer.

It is found in the cell inner membrane. Uptake of inorganic carbon by cells in the presence of thiosulphate is fully inhibited by the uncouplers carbonyl cyanide m-chlorophenyl hydrazone (CCCP), carbonyl cyanide p-trifluoromethoxyphenyl hydrazone (FCCP), S13 or SF6847. Not inhibited by the ATPase inhibitor N,N-dicyclohexylcarbodiimide (DCCD). Inorganic carbon uptake is inhibited by the ionophore carbonyl cyanide m-chlorophenyl hydrazone (CCCP), suggesting uptake is coupled to a cation gradient. Its function is as follows. Part of an energy-coupled inorganic carbon pump; its substrate may be carbon dioxide. Expression of both dabA2 and dabB2 (DAB2) restores growth in ambient air to E.coli deleted of its carbonic anhydrase genes (called CAfree, deletion of 'can' and 'cynT'); neither dabA2 or dabB2 alone is sufficient. Rescue is pH-independent, suggesting it transports CO(2) and not carbonate ions. Together the genes allow greater than normal uptake of inorganic carbon by E.coli. Uptake of carbon dioxide rather than bicarbonate has been suggested based on kinetic calculations. This Halothiobacillus neapolitanus (strain ATCC 23641 / c2) (Thiobacillus neapolitanus) protein is Probable inorganic carbon transporter subunit DabB2.